A 74-amino-acid polypeptide reads, in one-letter code: Protein DELETION OF SUV3 SUPPRESSOR 1(I) (74 aa).

The interval 35-74 is disordered; that stretch reads EKEEVKEVSQQWEDDWDDDDVNDDFSRQLRKELENGTDKK. The segment covering 46–57 has biased composition (acidic residues); the sequence is WEDDWDDDDVND. The segment covering 58–74 has biased composition (basic and acidic residues); sequence DFSRQLRKELENGTDKK.

This sequence belongs to the DSS1/SEM1 family. In terms of assembly, part of the 26S proteasome. Interacts with BRCA2A and BRCA2B. Interacts with UCH1 and UCH2. Can form a tripartite complex with both RAD51 and BRCA2B or both DMC1 and BRCA2B.

Subunit of the 26S proteasome which plays a role in ubiquitin-dependent proteolysis. The chain is Protein DELETION OF SUV3 SUPPRESSOR 1(I) from Arabidopsis thaliana (Mouse-ear cress).